Consider the following 395-residue polypeptide: Altered inheritance of mitochondria protein 39, mitochondrial (395 aa).

Residues Gln-156 to Tyr-176 traverse the membrane as a helical segment.

It belongs to the AIM39 family.

It is found in the mitochondrion membrane. The chain is Altered inheritance of mitochondria protein 39, mitochondrial (AIM39) from Saccharomyces cerevisiae (strain ATCC 204508 / S288c) (Baker's yeast).